The chain runs to 419 residues: Acetyltransferase fsoF (419 aa).

Asn2 carries an N-linked (GlcNAc...) asparagine glycan. Helical transmembrane passes span 4–24 (TIIS…VVGF) and 62–82 (AFLG…AILS). The tract at residues 89–114 (QSPTSSLGGLIPPTTRDTPKTQNNAT) is disordered. N-linked (GlcNAc...) asparagine glycosylation is found at Asn112 and Asn169. The next 4 helical transmembrane spans lie at 230–250 (YWAI…VVAV), 314–334 (YVFM…SDVS), 337–357 (IPLG…GIML), and 386–406 (VSGP…WIYM).

The protein belongs to the wax synthase family.

It is found in the membrane. It catalyses the reaction 3-O-(beta-D-glucopyranosyl)-2alpha-hydroxyisomotiol + acetyl-CoA = 3-O-(beta-D-glucopyranosyl)-2alpha-acetoxyisomotiol + CoA. It carries out the reaction 2-deacetylfuscoatroside + acetyl-CoA = fuscoatroside + CoA. The protein operates within secondary metabolite biosynthesis; terpenoid biosynthesis. In terms of biological role, terpene cyclase-glycosyl transferase fusion protein; part of the gene cluster that mediates the biosynthesis of the enfumafungin-type antibiotic, fuscoatroside. Within the pathway, fsoF catalyzes the acetylation of C2-alpha-OH following the C2 hydroxylation by the cytochrome monooxygenase fsoD. The fuscoatroside biosynthesis is initiated by the cyclization of 2,3(S)-oxidosqualene through FsoA's terpene cyclase (TC) domain, leading to the formation of the fernane skeleton isomotiol, harboring a fernane triterpene skeleton with a C8-C9 double bond. Subsequently, C2-alpha-hydroxylation mediated by fsoD results in the production of 2-alpha-hydroxy-isomotiol, which is further acetylated by fsoF. The glycosyltransferase (GT) domain of FsoA may convert isomotiol, 2-alpha-hydroxy-isomotiol, and the acetylated derivative of 2-alpha-hydroxy-isomotiol into their corresponding glycosides 3-O-(beta-D-glucopyranosyl)-isomotiol, 3-O-(beta-D-glucopyranosyl)-2-alpha-hydroxy-isomotiol, and 3-O-(beta-D-glucopyranosyl)-2-alpha-acetoxy-isomotiol, which then undergo oxidative cleavage under the action of fsoE to form s 2-deacetoxy-fuscoatroside, 2-deacetyl-fuscoatroside, and fuscoatroside, respectively. Although hydroxylation followed by acetylation of 3-O-(beta-D-glucopyranosyl)-isomotiol and 2-deacetoxy-fuscoatroside by fsoD and fsoF could not be ruled out, this process is likely to occur with difficulty due to bulky steric hindrance caused by the presence of a glycan at C3 in these compounds. Interestingly, fsoE can also utilize the aglycones isomotiol and 2-alpha-hydroxy-isomotiol as substrates to generate 19-beta-hydroxy-isomotiol and 2-alpha,19-beta-dihydroxy-isomotiol, respectively. These reactions occur with lower efficiency. Finally, fsoE can further convert 2-alpha,19-beta-dihydroxy-isomotiol into 2-alpha-hydroxy-ismotiol-19-one and 2-alpha-hydroxy-ismotiol-19-one into 2-deacetyl-3-deglucopyranosyl-fuscoatroside. This Humicola fuscoatra protein is Acetyltransferase fsoF.